The primary structure comprises 679 residues: Glycine--tRNA ligase beta subunit (679 aa).

Belongs to the class-II aminoacyl-tRNA synthetase family. As to quaternary structure, tetramer of two alpha and two beta subunits.

It is found in the cytoplasm. It carries out the reaction tRNA(Gly) + glycine + ATP = glycyl-tRNA(Gly) + AMP + diphosphate. The sequence is that of Glycine--tRNA ligase beta subunit from Streptococcus pyogenes serotype M18 (strain MGAS8232).